Consider the following 615-residue polypeptide: DNA mismatch repair protein MutL (615 aa).

The segment at 363 to 397 (FAEPAAREPVAPRYTPAPASGSRPAAPWPNAQPGY) is disordered. Low complexity predominate over residues 364-391 (AEPAAREPVAPRYTPAPASGSRPAAPWP).

The protein belongs to the DNA mismatch repair MutL/HexB family.

This protein is involved in the repair of mismatches in DNA. It is required for dam-dependent methyl-directed DNA mismatch repair. May act as a 'molecular matchmaker', a protein that promotes the formation of a stable complex between two or more DNA-binding proteins in an ATP-dependent manner without itself being part of a final effector complex. This chain is DNA mismatch repair protein MutL, found in Escherichia coli O9:H4 (strain HS).